The following is a 372-amino-acid chain: Forkhead box protein F1-B (372 aa).

The interval 1–51 is disordered; that stretch reads MTAEIQQPPSQPPAQSSPMSAATDKHGGQPSAMESASCATKTKKTNAGIRR. Positions 13–22 are enriched in low complexity; that stretch reads PAQSSPMSAA. Residues 54–148 constitute a DNA-binding region (fork-head); it reads KPPYSYIALI…EEGSFRRRPR (95 aa).

As to expression, at the late gastrula stage, expressed in the presumptive ventrolateral mesoderm. During neurulation and tailbud stages, expressed in the lateral plate mesoderm and in the neural crest-derived structures of the head and branchial arches. During tailbud stages, expressed in the pronephros and pronephros ducts and in cells that migrate from the dorsolateral plate to the ventral region of the embryo (with the notable exception of the heart). These cells may represent hematopoietic or endothelial progenitor cells.

It is found in the nucleus. Probable transcription factor. Required for smooth muscle (visceral mesoderm) differentiation during gut development. Also required for normal proliferation of the lateral plate mesoderm. Acts as a downstream mediator of bmp4-signaling. This chain is Forkhead box protein F1-B (foxf1-b), found in Xenopus laevis (African clawed frog).